Here is a 269-residue protein sequence, read N- to C-terminus: Magnetosome protein MamX (269 aa).

Topologically, residues 1–10 (MNTKAVAHPD) are cytoplasmic. Residues 11 to 31 (IAVWIMALGIAFSMALVLTAL) form a helical membrane-spanning segment. The Lumenal segment spans residues 32–269 (FNANPWEDHT…NVGGVDAEER (238 aa)). The short motif at 48–71 (IVAGMAAPHRDGREKMVCSSCHIV) is the MCR (magnetochrome) 1 element. C65, C68, H69, C104, C107, and H108 together coordinate heme. The MCR 2 motif lies at 87–110 (IVEGTPAPHVDGREKMACASCHTI).

The protein belongs to the magnetosome MamX family. As to quaternary structure, probably interacts with FtsZ-like and MamY proteins. Heme is required as a cofactor.

The protein resides in the magnetosome membrane. Functionally, required for correct biomineralization of the magnetosome, maybe via redox control. May function with MamY, MamZ amd Mms6 in biomineralization. In Magnetospirillum gryphiswaldense (strain DSM 6361 / JCM 21280 / NBRC 15271 / MSR-1), this protein is Magnetosome protein MamX.